We begin with the raw amino-acid sequence, 402 residues long: ORC1-type DNA replication protein 17 (402 aa).

ATP-binding residues include Y223 and R235.

It belongs to the CDC6/cdc18 family.

Functionally, involved in regulation of DNA replication. This is ORC1-type DNA replication protein 17 (cdc6q) from Haloarcula marismortui (strain ATCC 43049 / DSM 3752 / JCM 8966 / VKM B-1809) (Halobacterium marismortui).